The sequence spans 222 residues: Chorionic somatomammotropin hormone-like 1 (222 aa).

An N-terminal signal peptide occupies residues 1 to 26; it reads MAAGSRTSLLLAFALLCLPWLQEAGA. Histidine 44 and glutamate 205 together coordinate Zn(2+). Cysteine 213 and cysteine 220 form a disulfide bridge.

This sequence belongs to the somatotropin/prolactin family.

The protein localises to the secreted. Its function is as follows. May be a novel gestational hormone required to compensate for absence of other members of the GH/CS cluster during gestation. The protein is Chorionic somatomammotropin hormone-like 1 (CSHL1) of Homo sapiens (Human).